Here is a 401-residue protein sequence, read N- to C-terminus: Eukaryotic translation initiation factor 3 subunit M (401 aa).

The PCI domain maps to 188-356; that stretch reads QRMLSHQFLV…RIVNVNSSTQ (169 aa).

It belongs to the eIF-3 subunit M family. In terms of assembly, component of the eukaryotic translation initiation factor 3 (eIF-3) complex.

It is found in the cytoplasm. Functionally, component of the eukaryotic translation initiation factor 3 (eIF-3) complex, which is involved in protein synthesis of a specialized repertoire of mRNAs and, together with other initiation factors, stimulates binding of mRNA and methionyl-tRNAi to the 40S ribosome. The eIF-3 complex specifically targets and initiates translation of a subset of mRNAs involved in cell proliferation. The polypeptide is Eukaryotic translation initiation factor 3 subunit M (eif3m) (Dictyostelium discoideum (Social amoeba)).